The following is a 124-amino-acid chain: Small ribosomal subunit protein uS13 (124 aa).

Residues 95-124 (GLPVRGQRTKTNARTRKGPKRTVAGKKKAR) form a disordered region.

Belongs to the universal ribosomal protein uS13 family. Part of the 30S ribosomal subunit. Forms a loose heterodimer with protein S19. Forms two bridges to the 50S subunit in the 70S ribosome.

Functionally, located at the top of the head of the 30S subunit, it contacts several helices of the 16S rRNA. In the 70S ribosome it contacts the 23S rRNA (bridge B1a) and protein L5 of the 50S subunit (bridge B1b), connecting the 2 subunits; these bridges are implicated in subunit movement. Contacts the tRNAs in the A and P-sites. The sequence is that of Small ribosomal subunit protein uS13 from Leifsonia xyli subsp. xyli (strain CTCB07).